Consider the following 342-residue polypeptide: Methionyl-tRNA formyltransferase (342 aa).

119-122 (SILP) is a binding site for (6S)-5,6,7,8-tetrahydrofolate.

Belongs to the Fmt family.

It catalyses the reaction L-methionyl-tRNA(fMet) + (6R)-10-formyltetrahydrofolate = N-formyl-L-methionyl-tRNA(fMet) + (6S)-5,6,7,8-tetrahydrofolate + H(+). Functionally, attaches a formyl group to the free amino group of methionyl-tRNA(fMet). The formyl group appears to play a dual role in the initiator identity of N-formylmethionyl-tRNA by promoting its recognition by IF2 and preventing the misappropriation of this tRNA by the elongation apparatus. The chain is Methionyl-tRNA formyltransferase from Nostoc sp. (strain PCC 7120 / SAG 25.82 / UTEX 2576).